An 808-amino-acid chain; its full sequence is Dynamin-related protein 3A (808 aa).

A disordered region spans residues 1–31 (MTIEEVSGETPPSTPPSSSTPSPSSSTTNAA). A compositionally biased stretch (low complexity) spans 16 to 28 (PSSSTPSPSSSTT). The Dynamin-type G domain maps to 56–330 (TIALPQVVVV…LVQHIKVLLP (275 aa)). The interval 66–73 (GSQSSGKS) is G1 motif. Residue 66–73 (GSQSSGKS) coordinates GTP. The G2 motif stretch occupies residues 92 to 94 (CTR). The tract at residues 172-175 (DLPG) is G3 motif. GTP is bound by residues 172–176 (DLPGI) and 241–244 (TKLD). A G4 motif region spans residues 241–244 (TKLD). The tract at residues 271 to 274 (VNRC) is G5 motif. The segment at 548–578 (IPHPVARPKDTVEPDRTSSSTSQVKSRSFLG) is disordered. Residues 554–563 (RPKDTVEPDR) show a composition bias toward basic and acidic residues. A compositionally biased stretch (low complexity) spans 564 to 575 (TSSSTSQVKSRS). The region spanning 670-761 (IQITKLLLRS…TLDELPLEAD (92 aa)) is the GED domain. Residues 774–808 (LTSSKYSTSSSYSASPSTTRRSRRAGDQHQNGYGF) form a disordered region. Over residues 775–792 (TSSKYSTSSSYSASPSTT) the composition is skewed to low complexity.

It belongs to the TRAFAC class dynamin-like GTPase superfamily. Dynamin/Fzo/YdjA family. In terms of assembly, homooligomer. Interacts with ARC5 on peroxisomes and ELM1 on mitochondria. Ubiquitous. Preferentially expressed in flowers.

The protein resides in the mitochondrion. The protein localises to the peroxisome. In terms of biological role, involved in the control of mitochondrial and peroxisomal division and morphology. In association with PEX11C, PEX11D, PEX11E and FIS1B, is involved in cell cycle-associated constitutive self-replication of preexisting peroxisomes. In Arabidopsis thaliana (Mouse-ear cress), this protein is Dynamin-related protein 3A (DRP3A).